Reading from the N-terminus, the 217-residue chain is Neurotrophic factor BDNF precursor form (217 aa).

The propeptide occupies 1–108 (PMKEVSIRGQ…AANMSMRVRR (108 aa)). Asn101 carries an N-linked (GlcNAc...) asparagine glycan. Disulfide bonds link Cys121-Cys188 and Cys166-Cys217.

The protein belongs to the NGF-beta family.

It localises to the secreted. Functionally, promotes the survival of neuronal populations that are all located either in the central nervous system or directly connected to it. The sequence is that of Neurotrophic factor BDNF precursor form (BDNF) from Acrantophis dumerili (Dumeril's ground boa).